The primary structure comprises 817 residues: Sorting nexin-29 (817 aa).

Residues S37–K181 form the RUN domain. S269, S292, S293, S331, and S345 each carry phosphoserine. The segment at D271 to R299 is disordered. Disordered regions lie at residues K344 to G381 and A417 to A460. Residues D347 to V358 are compositionally biased toward acidic residues. The segment covering G369–L378 has biased composition (basic and acidic residues). The segment covering S445 to A460 has biased composition (low complexity). S451 bears the Phosphoserine mark. A coiled-coil region spans residues M466–V546. A Phosphoserine modification is found at S641. Position 643 is a phosphothreonine (T643). Phosphoserine is present on residues S644 and S648. A PX domain is found at A658–G781. Residues L784 to L817 are disordered.

Belongs to the sorting nexin family.

This Bos taurus (Bovine) protein is Sorting nexin-29 (SNX29).